A 328-amino-acid polypeptide reads, in one-letter code: Alanine racemase (328 aa).

K33 functions as the Proton acceptor; specific for D-alanine in the catalytic mechanism. K33 bears the N6-(pyridoxal phosphate)lysine mark. Position 118 (R118) interacts with substrate. The Proton acceptor; specific for L-alanine role is filled by Y237. M283 contacts substrate.

It belongs to the alanine racemase family. Pyridoxal 5'-phosphate serves as cofactor.

It carries out the reaction L-alanine = D-alanine. It participates in amino-acid biosynthesis; D-alanine biosynthesis; D-alanine from L-alanine: step 1/1. In terms of biological role, catalyzes the interconversion of L-alanine and D-alanine. May also act on other amino acids. This chain is Alanine racemase (alr), found in Campylobacter jejuni (strain RM1221).